The chain runs to 212 residues: Ribonuclease HII (212 aa).

An RNase H type-2 domain is found at 1–206; the sequence is MARFGVDEAG…SRDALGAAEQ (206 aa). Aspartate 7, glutamate 8, and aspartate 100 together coordinate a divalent metal cation.

It belongs to the RNase HII family. Requires Mn(2+) as cofactor. Mg(2+) serves as cofactor.

It is found in the cytoplasm. It carries out the reaction Endonucleolytic cleavage to 5'-phosphomonoester.. Endonuclease that specifically degrades the RNA of RNA-DNA hybrids. The chain is Ribonuclease HII from Halobacterium salinarum (strain ATCC 29341 / DSM 671 / R1).